Reading from the N-terminus, the 182-residue chain is Lipoprotein signal peptidase (182 aa).

3 helical membrane passes run 12–32, 68–88, and 91–111; these read VAVF…TKAW, ATWV…VAGV, and VSMK…GNLI. Active-site residues include Asp-127 and Asp-140. A helical membrane pass occupies residues 135-155; the sequence is VGNVADIYLVVAGVVLVILIL.

Belongs to the peptidase A8 family.

It localises to the cell membrane. The enzyme catalyses Release of signal peptides from bacterial membrane prolipoproteins. Hydrolyzes -Xaa-Yaa-Zaa-|-(S,diacylglyceryl)Cys-, in which Xaa is hydrophobic (preferably Leu), and Yaa (Ala or Ser) and Zaa (Gly or Ala) have small, neutral side chains.. The protein operates within protein modification; lipoprotein biosynthesis (signal peptide cleavage). This protein specifically catalyzes the removal of signal peptides from prolipoproteins. The chain is Lipoprotein signal peptidase from Bifidobacterium longum (strain DJO10A).